The primary structure comprises 47 residues: Potassium channel toxin gamma-KTx 5.1 (47 aa).

4 disulfides stabilise this stretch: cysteine 5/cysteine 23, cysteine 11/cysteine 34, cysteine 20/cysteine 39, and cysteine 24/cysteine 41.

Belongs to the ergtoxin family. Gamma-KTx 5 subfamily. In terms of tissue distribution, expressed by the venom gland.

The protein resides in the secreted. Reversibly blocks Kv11/ERG potassium channels. In Centruroides sculpturatus (Arizona bark scorpion), this protein is Potassium channel toxin gamma-KTx 5.1.